We begin with the raw amino-acid sequence, 530 residues long: MLVLFETSVGYAIFKVLNEKKLQEVDSLWKEFETPEKANKIVKLKHFEKFQDTAEALAAFTALMEGKINKQLKKVLKKIVKEAHEPLAVADAKLGGVIKEKLNLSCIHSPVVNELMRGIRSQMDGLIPGVEPREMAAMCLGLAHSLSRYRLKFSADKVDTMIVQAISLLDDLDKELNNYIMRCREWYGWHFPELGKIISDNLTYCKCLQKVGDRKNYASAKLSELLPEEVEAEVKAAAEISMGTEVSEEDICNILHLCTQVIEISEYRTQLYEYLQNRMMAIAPNVTVMVGELVGARLIAHAGSLLNLAKHAASTVQILGAEKALFRALKSRRDTPKYGLIYHASLVGQTSPKHKGKISRMLAAKTVLAIRYDAFGEDSSSAMGVENRAKLEARLRTLEDRGIRKISGTGKALAKTEKYEHKSEVKTYDPSGDSTLPTCSKKRKIEQVDKEDEITEKKAKKAKIKVKVEEEEEEEKVAEEEETSVKKKKKKGKKKHIKEEPLSEEEPCTSTAIASPEKKKKKKKKRDNED.

Residue T34 is modified to Phosphothreonine. S109 carries the post-translational modification Phosphoserine. K157 participates in a covalent cross-link: Glycyl lysine isopeptide (Lys-Gly) (interchain with G-Cter in SUMO2). A Nop domain is found at 282 to 400; it reads IAPNVTVMVG…LEARLRTLED (119 aa). A phosphoserine mark is found at S304 and S351. Residues K353, K411, K415, K422, K426, K441, K444, and K465 each participate in a glycyl lysine isopeptide (Lys-Gly) (interchain with G-Cter in SUMO2) cross-link. Positions 409–530 are disordered; the sequence is TGKALAKTEK…KKKKKRDNED (122 aa). Residues 414-427 are compositionally biased toward basic and acidic residues; it reads AKTEKYEHKSEVKT. Residue K467 forms a Glycyl lysine isopeptide (Lys-Gly) (interchain with G-Cter in SUMO); alternate linkage. A Glycyl lysine isopeptide (Lys-Gly) (interchain with G-Cter in SUMO1); alternate cross-link involves residue K467. Residue K467 forms a Glycyl lysine isopeptide (Lys-Gly) (interchain with G-Cter in SUMO2); alternate linkage. Positions 469 to 482 are enriched in acidic residues; that stretch reads EEEEEEEKVAEEEE. The residue at position 484 (S484) is a Phosphoserine. A Glycyl lysine isopeptide (Lys-Gly) (interchain with G-Cter in SUMO2) cross-link involves residue K486. Basic residues predominate over residues 486 to 496; it reads KKKKKKGKKKH. K498 is covalently cross-linked (Glycyl lysine isopeptide (Lys-Gly) (interchain with G-Cter in SUMO); alternate). A Glycyl lysine isopeptide (Lys-Gly) (interchain with G-Cter in SUMO2); alternate cross-link involves residue K498. Phosphoserine is present on residues S503 and S515. The span at 518–530 shows a compositional bias: basic residues; that stretch reads KKKKKKKKRDNED.

It belongs to the NOP5/NOP56 family. As to quaternary structure, core component of box C/D small nucleolar ribonucleoprotein (snoRNP) particles; the core proteins SNU13, NOP56, NOP58 and FBL or FBLL1 assemble stepwise onto the snoRNA. Interacts with NOLC1/Nopp140. Interacts with NOPCHAP1, NUFIP1, RUVBL1 and RUVBL2; NOPCHAP1 bridges the association of NOP58 with RUVBL1:RUVBL2 and NUFIP1. Interacts with PIH1D1. Part of the small subunit (SSU) processome, composed of more than 70 proteins and the RNA chaperone small nucleolar RNA (snoRNA) U3. In terms of processing, sumoylation is essential for high-affinity binding to snoRNAs.

It localises to the nucleus. The protein resides in the nucleolus. It is found in the nucleoplasm. In terms of biological role, required for the biogenesis of box C/D snoRNAs such as U3, U8 and U14 snoRNAs. Part of the small subunit (SSU) processome, first precursor of the small eukaryotic ribosomal subunit. During the assembly of the SSU processome in the nucleolus, many ribosome biogenesis factors, an RNA chaperone and ribosomal proteins associate with the nascent pre-rRNA and work in concert to generate RNA folding, modifications, rearrangements and cleavage as well as targeted degradation of pre-ribosomal RNA by the RNA exosome. Core component of box C/D small nucleolar ribonucleoprotein (snoRNP) complexes that function in methylation of multiple sites on ribosomal RNAs (rRNAs) and messenger RNAs (mRNAs). The protein is Nucleolar protein 58 (NOP58) of Macaca fascicularis (Crab-eating macaque).